Here is a 556-residue protein sequence, read N- to C-terminus: Arginine--tRNA ligase (556 aa).

The 'HIGH' region motif lies at 132 to 142; it reads ANPTGDLHLGH.

This sequence belongs to the class-I aminoacyl-tRNA synthetase family. Monomer.

It localises to the cytoplasm. The catalysed reaction is tRNA(Arg) + L-arginine + ATP = L-arginyl-tRNA(Arg) + AMP + diphosphate. In Listeria monocytogenes serotype 4a (strain HCC23), this protein is Arginine--tRNA ligase.